We begin with the raw amino-acid sequence, 352 residues long: Holliday junction branch migration complex subunit RuvB (352 aa).

Residues 13–201 (FSLRKKELRL…FGISQKIEFY (189 aa)) form a large ATPase domain (RuvB-L) region. ATP contacts are provided by residues R41, G82, K85, T86, T87, 148–150 (EDF), R191, Y201, and R238. T86 contacts Mg(2+). A small ATPAse domain (RuvB-S) region spans residues 202–273 (TCDELKQIID…LIKKALNSYQ (72 aa)). Residues 276–352 (EKGLDYVDRQ…KYIDSKNDNF (77 aa)) are head domain (RuvB-H). Residues R330 and R335 each coordinate DNA.

Belongs to the RuvB family. As to quaternary structure, homohexamer. Forms an RuvA(8)-RuvB(12)-Holliday junction (HJ) complex. HJ DNA is sandwiched between 2 RuvA tetramers; dsDNA enters through RuvA and exits via RuvB. An RuvB hexamer assembles on each DNA strand where it exits the tetramer. Each RuvB hexamer is contacted by two RuvA subunits (via domain III) on 2 adjacent RuvB subunits; this complex drives branch migration. In the full resolvosome a probable DNA-RuvA(4)-RuvB(12)-RuvC(2) complex forms which resolves the HJ.

It localises to the cytoplasm. The catalysed reaction is ATP + H2O = ADP + phosphate + H(+). Its function is as follows. The RuvA-RuvB-RuvC complex processes Holliday junction (HJ) DNA during genetic recombination and DNA repair, while the RuvA-RuvB complex plays an important role in the rescue of blocked DNA replication forks via replication fork reversal (RFR). RuvA specifically binds to HJ cruciform DNA, conferring on it an open structure. The RuvB hexamer acts as an ATP-dependent pump, pulling dsDNA into and through the RuvAB complex. RuvB forms 2 homohexamers on either side of HJ DNA bound by 1 or 2 RuvA tetramers; 4 subunits per hexamer contact DNA at a time. Coordinated motions by a converter formed by DNA-disengaged RuvB subunits stimulates ATP hydrolysis and nucleotide exchange. Immobilization of the converter enables RuvB to convert the ATP-contained energy into a lever motion, pulling 2 nucleotides of DNA out of the RuvA tetramer per ATP hydrolyzed, thus driving DNA branch migration. The RuvB motors rotate together with the DNA substrate, which together with the progressing nucleotide cycle form the mechanistic basis for DNA recombination by continuous HJ branch migration. Branch migration allows RuvC to scan DNA until it finds its consensus sequence, where it cleaves and resolves cruciform DNA. This is Holliday junction branch migration complex subunit RuvB from Prochlorococcus marinus (strain MIT 9312).